A 108-amino-acid chain; its full sequence is Nucleoid-associated protein Mmwyl1_2533 (108 aa).

Positions 1–22 (MFKGGMGNMMRQAQQMQENMQK) are disordered. Residues 11–22 (RQAQQMQENMQK) are compositionally biased toward polar residues.

The protein belongs to the YbaB/EbfC family. In terms of assembly, homodimer.

Its subcellular location is the cytoplasm. It is found in the nucleoid. Its function is as follows. Binds to DNA and alters its conformation. May be involved in regulation of gene expression, nucleoid organization and DNA protection. This is Nucleoid-associated protein Mmwyl1_2533 from Marinomonas sp. (strain MWYL1).